We begin with the raw amino-acid sequence, 41 residues long: MLQEFNQNQKAKVAVCLNKTNSTDLAWWRTWTSSWWANVYF.

Its function is as follows. This protein is involved in control of the biosynthesis of tryptophan. This Vibrio parahaemolyticus serotype O3:K6 (strain RIMD 2210633) protein is trp operon leader peptide (trpL).